Reading from the N-terminus, the 89-residue chain is N.vectensis toxin 7 (89 aa).

The first 21 residues, 1-21, serve as a signal peptide directing secretion; the sequence is MASFFKIAVICLVMLVVCSNA. Intrachain disulfides connect C44–C77, C46–C69, and C62–C78.

In terms of tissue distribution, expressed in ectodermal gland cells.

In terms of biological role, probable toxin. This is N.vectensis toxin 7 from Nematostella vectensis (Starlet sea anemone).